Here is a 216-residue protein sequence, read N- to C-terminus: Probable methylthioribulose-1-phosphate dehydratase (216 aa).

Cys-87 is a binding site for substrate. Zn(2+)-binding residues include His-105 and His-107. The active-site Proton donor/acceptor is the Glu-129.

The protein belongs to the aldolase class II family. MtnB subfamily. The cofactor is Zn(2+).

The protein localises to the cytoplasm. The enzyme catalyses 5-(methylsulfanyl)-D-ribulose 1-phosphate = 5-methylsulfanyl-2,3-dioxopentyl phosphate + H2O. It participates in amino-acid biosynthesis; L-methionine biosynthesis via salvage pathway; L-methionine from S-methyl-5-thio-alpha-D-ribose 1-phosphate: step 2/6. Catalyzes the dehydration of methylthioribulose-1-phosphate (MTRu-1-P) into 2,3-diketo-5-methylthiopentyl-1-phosphate (DK-MTP-1-P). This is Probable methylthioribulose-1-phosphate dehydratase from Drosophila persimilis (Fruit fly).